Reading from the N-terminus, the 525-residue chain is GMP synthase [glutamine-hydrolyzing] (525 aa).

The Glutamine amidotransferase type-1 domain occupies 9–207 (RILILDFGSQ…VRDICQCEAL (199 aa)). The active-site Nucleophile is the C86. Residues H181 and E183 contribute to the active site. Residues 208-400 (WTPAKIIDDA…LGLPYDMLYR (193 aa)) form the GMPS ATP-PPase domain. 235 to 241 (SGGVDSS) contacts ATP.

Homodimer.

The enzyme catalyses XMP + L-glutamine + ATP + H2O = GMP + L-glutamate + AMP + diphosphate + 2 H(+). Its pathway is purine metabolism; GMP biosynthesis; GMP from XMP (L-Gln route): step 1/1. Catalyzes the synthesis of GMP from XMP. This chain is GMP synthase [glutamine-hydrolyzing], found in Citrobacter koseri (strain ATCC BAA-895 / CDC 4225-83 / SGSC4696).